Reading from the N-terminus, the 342-residue chain is uncharacterized protein (342 aa).

Transmembrane regions (helical) follow at residues 8–28 (FESS…TSLF), 39–59 (ISFL…MLWI), 79–99 (SSFS…FILI), 108–128 (IFWV…PFYM), 142–162 (GWYI…LIMP), 175–195 (INYF…AVVI), 207–227 (AMAP…VALI), 242–262 (FYIF…MAII), 276–296 (AMSW…THLV), and 304–324 (IVDY…IVTL).

It belongs to the tellurite-resistance/dicarboxylate transporter (TDT) family.

The protein localises to the cell membrane. This is an uncharacterized protein from Methanocaldococcus jannaschii (strain ATCC 43067 / DSM 2661 / JAL-1 / JCM 10045 / NBRC 100440) (Methanococcus jannaschii).